A 532-amino-acid polypeptide reads, in one-letter code: Fatty-acid amide hydrolase 2-A (532 aa).

Residues 9-29 (FLGRLLRAVVWILFAAFKLFA) traverse the membrane as a helical segment. Catalysis depends on charge relay system residues K129 and S204. Residue S228 is the Acyl-ester intermediate of the active site.

The protein belongs to the amidase family.

The protein resides in the membrane. It carries out the reaction N-(5Z,8Z,11Z,14Z-eicosatetraenoyl)-ethanolamine + H2O = ethanolamine + (5Z,8Z,11Z,14Z)-eicosatetraenoate. The enzyme catalyses (9Z)-octadecenamide + H2O = (9Z)-octadecenoate + NH4(+). The protein is Fatty-acid amide hydrolase 2-A (faah2a) of Danio rerio (Zebrafish).